Consider the following 118-residue polypeptide: Large ribosomal subunit protein bL21c (118 aa).

It belongs to the bacterial ribosomal protein bL21 family. Part of the 50S ribosomal subunit.

Its subcellular location is the plastid. It is found in the chloroplast. This protein binds to 23S rRNA. This Zygnema circumcarinatum (Green alga) protein is Large ribosomal subunit protein bL21c.